A 234-amino-acid chain; its full sequence is HTH-type transcriptional regulator SmoD (234 aa).

An HTH gntR-type domain is found at 8–76 (LPMYMQIAEM…QGSGNYIRAV (69 aa)). A DNA-binding region (H-T-H motif) is located at residues 36 to 55 (ERDMAADLGIAVGTLRKSLA).

Its subcellular location is the cytoplasm. Its function is as follows. Probably regulates expression of genes involved in the sulfoquinovose monooxygenase (sulfo-SMO) pathway (smoABCDEFGHI). This chain is HTH-type transcriptional regulator SmoD, found in Agrobacterium fabrum (strain C58 / ATCC 33970) (Agrobacterium tumefaciens (strain C58)).